Reading from the N-terminus, the 476-residue chain is ATP synthase subunit beta, mitochondrial (476 aa).

Glycine 156–valine 163 is an ATP binding site.

F-type ATP synthases have 2 components, the catalytic core F(1) and the membrane-embedded component F(0), linked together by a central stalk and a peripheral stalk. The central stalk, also called rotor shaft, is often seen as part of F(1). The peripheral stalk is seen as part of F(0). F(0) contains the membrane channel next to the rotor. F-type ATP synthases form dimers but each monomer functions independently in ATP generation. The dimer consists of 18 different polypeptides: ATP1 (subunit alpha, part of F(1), 3 molecules per monomer), ATP2 (subunit beta, part of F(1), 3 molecules per monomer), ATP3 (subunit gamma, part of the central stalk), ATP4 (subunit b, part of the peripheral stalk), ATP5/OSCP (subunit 5/OSCP, part of the peripheral stalk), ATP6 (subunit a, part of the peripheral stalk), ATP7 (subunit d, part of the peripheral stalk), ATP8 (subunit 8, part of the peripheral stalk), OLI1 (subunit c, part of the rotor, 10 molecules per monomer), ATP14 (subunit h, part of the peripheral stalk), ATP15 (subunit epsilon, part of the central stalk), ATP16 (subunit delta, part of the central stalk), ATP17 (subunit f, part of the peripheral stalk), ATP18 (subunit i/j, part of the peripheral stalk). Dimer-specific subunits are ATP19 (subunit k, at interface between monomers), ATP20 (subunit g, at interface between monomers), TIM11 (subunit e, at interface between monomers). Also contains subunit L.

It is found in the mitochondrion inner membrane. The enzyme catalyses ATP + H2O + 4 H(+)(in) = ADP + phosphate + 5 H(+)(out). In terms of biological role, mitochondrial membrane ATP synthase (F(1)F(0) ATP synthase or Complex V) produces ATP from ADP in the presence of a proton gradient across the membrane which is generated by electron transport complexes of the respiratory chain. F-type ATP synthases consist of two structural domains, F(1) - containing the extramembraneous catalytic core, and F(0) - containing the membrane proton channel, linked together by a central stalk and a peripheral stalk. During catalysis, ATP synthesis in the catalytic domain of F(1) is coupled via a rotary mechanism of the central stalk subunits to proton translocation. Subunits alpha/ATP1 and beta/ATP2 form the catalytic core in F(1). Rotation of the central stalk against the surrounding alpha/ATP1(3)beta/ATP2(3) subunits leads to hydrolysis of ATP in three separate catalytic sites on the beta/ATP2 subunits. The sequence is that of ATP synthase subunit beta, mitochondrial from Pichia angusta (Yeast).